Here is a 239-residue protein sequence, read N- to C-terminus: Phosducin-like protein 3 (239 aa).

The segment at 16–37 (KKGILPPKETPVEEEEDEQLHL) is disordered. The Phosducin domain maps to 28–201 (EEEEDEQLHL…LEWRLSESGA (174 aa)). The residue at position 41 (Ser41) is a Phosphoserine. The thioredoxin fold stretch occupies residues 89-239 (FGELKEISGQ…RDGEEDSDED (151 aa)). Residues 217–227 (QLMTSIRCSAN) show a composition bias toward polar residues. Residues 217-239 (QLMTSIRCSANTHRDGEEDSDED) are disordered.

This sequence belongs to the phosducin family. Interacts (via thioredoxin fold region) with kdr/vegfr2 (via juxtamembrane domain). As to expression, expressed in endothelial cells.

The protein resides in the cytoplasm. Its subcellular location is the perinuclear region. The protein localises to the endoplasmic reticulum. In terms of biological role, acts as a chaperone for the angiogenic VEGF receptor KDR/VEGFR2, increasing its abundance by inhibiting its ubiquitination and degradation. Inhibits the folding activity of the chaperonin-containing T-complex (CCT) which leads to inhibition of cytoskeletal actin folding. Acts as a chaperone during heat shock alongside HSP90 and HSP40/70 chaperone complexes. Modulates the activation of caspases during apoptosis. The polypeptide is Phosducin-like protein 3 (Danio rerio (Zebrafish)).